The chain runs to 402 residues: Flavohemoprotein (402 aa).

Residues 1 to 136 enclose the Globin domain; the sequence is MLSEKTIEIV…IADAFISIEA (136 aa). Residue His85 participates in heme b binding. Catalysis depends on charge relay system residues Tyr95 and Glu135. Residues 147–402 form a reductase region; sequence GGWKDFRNFV…EFFGPAASLQ (256 aa). Residues 150–260 enclose the FAD-binding FR-type domain; the sequence is KDFRNFVVVK…SAPAGDFVLN (111 aa). Residues Tyr188 and 204–207 each bind FAD; that span reads RQYS. 273–278 contacts NADP(+); that stretch reads GVGITP. FAD is bound at residue 394–397; the sequence is FFGP.

This sequence belongs to the globin family. Two-domain flavohemoproteins subfamily. In the C-terminal section; belongs to the flavoprotein pyridine nucleotide cytochrome reductase family. It depends on heme b as a cofactor. Requires FAD as cofactor.

The enzyme catalyses 2 nitric oxide + NADPH + 2 O2 = 2 nitrate + NADP(+) + H(+). The catalysed reaction is 2 nitric oxide + NADH + 2 O2 = 2 nitrate + NAD(+) + H(+). Is involved in NO detoxification in an aerobic process, termed nitric oxide dioxygenase (NOD) reaction that utilizes O(2) and NAD(P)H to convert NO to nitrate, which protects the bacterium from various noxious nitrogen compounds. Therefore, plays a central role in the inducible response to nitrosative stress. This is Flavohemoprotein from Bacillus anthracis.